We begin with the raw amino-acid sequence, 619 residues long: DNA mismatch repair protein MutL (619 aa).

The protein belongs to the DNA mismatch repair MutL/HexB family.

Its function is as follows. This protein is involved in the repair of mismatches in DNA. It is required for dam-dependent methyl-directed DNA mismatch repair. May act as a 'molecular matchmaker', a protein that promotes the formation of a stable complex between two or more DNA-binding proteins in an ATP-dependent manner without itself being part of a final effector complex. The protein is DNA mismatch repair protein MutL of Shewanella frigidimarina (strain NCIMB 400).